The chain runs to 872 residues: Alanine--tRNA ligase (872 aa).

Histidine 567, histidine 571, cysteine 669, and histidine 673 together coordinate Zn(2+).

The protein belongs to the class-II aminoacyl-tRNA synthetase family. Requires Zn(2+) as cofactor.

It is found in the cytoplasm. The catalysed reaction is tRNA(Ala) + L-alanine + ATP = L-alanyl-tRNA(Ala) + AMP + diphosphate. Catalyzes the attachment of alanine to tRNA(Ala) in a two-step reaction: alanine is first activated by ATP to form Ala-AMP and then transferred to the acceptor end of tRNA(Ala). Also edits incorrectly charged Ser-tRNA(Ala) and Gly-tRNA(Ala) via its editing domain. The protein is Alanine--tRNA ligase of Streptococcus pneumoniae serotype 4 (strain ATCC BAA-334 / TIGR4).